A 517-amino-acid polypeptide reads, in one-letter code: Cytochrome P450 monooxygenase polD (517 aa).

A helical transmembrane segment spans residues 5 to 27 (VVLVGIVVLVLAYLSSTGKVYPH). Cysteine 435 lines the heme pocket.

Belongs to the cytochrome P450 family. It depends on heme as a cofactor.

Its subcellular location is the membrane. Functionally, cytochrome P450 monooxygenase; part of the gene cluster that mediates the biosynthesis of antifungal fernane-type triterpenoid polytolypin. PolD doe not seem to be involved in the biosynthesis of polytolypin. Within the pathway, the triterpene cyclase polA first catalyzes the cyclization of 2,3-oxidosqualene to motiol, polc converts the 4-alpha-methyl group of motiol to a carboxyl group, polB is responsible for appending a hydroxyl group at the 2-alpha position and polE is a dual functional P450, which can catalyze the formation of both the 1-beta-hydroxyl group and 10-beta-carboxyl group. The protein is Cytochrome P450 monooxygenase polD of Polytolypa hystricis (strain UAMH7299).